Consider the following 88-residue polypeptide: MSLFPIVGRFVGDFVPHLVAVDTSDTIDQIAEKVAVHTVGRRLPPDPTATGYEVLLDGETLDGGATLEAIMTKREMLPLQWFDVRFKK.

Belongs to the TmoB/XamoB family. In terms of assembly, the alkene monooxygenase multicomponent enzyme system is composed of an electron transfer component and a monooxygenase component interacting with the effector protein XamoD. The electron transfer component is composed of a ferredoxin reductase (XamoF) and a ferredoxin (XamoC), and the monooxygenase component is formed by a heterohexamer (dimer of heterotrimers) of two alpha subunits (XamoA), two beta subunits (XamoE) and two gamma subunits (XamoB).

Its subcellular location is the cytoplasm. It carries out the reaction propene + NADH + O2 + H(+) = 1,2-epoxypropane + NAD(+) + H2O. With respect to regulation, inhibited by propyne. Component of the alkene monooxygenase multicomponent enzyme system which catalyzes the O2- and NADH-dependent epoxidation of short chain (C2 to C6) alkenes to their corresponding epoxides. Also able to catalyze the oxidation of a number of chlorinated alkenes, including trichloroethylene, cis- and trans-1,2-dichloroethylene, vinyl chloride, 1-chloropropylene, 1,3-dichloropropylene and 2,3-dichloropropylene. The polypeptide is Alkene monooxygenase system, oxygenase component subunit gamma (Xanthobacter autotrophicus (strain ATCC BAA-1158 / Py2)).